The chain runs to 108 residues: Iron-sulfur cluster assembly protein CyaY (108 aa).

The protein belongs to the frataxin family.

Functionally, involved in iron-sulfur (Fe-S) cluster assembly. May act as a regulator of Fe-S biogenesis. This is Iron-sulfur cluster assembly protein CyaY from Pseudomonas paraeruginosa (strain DSM 24068 / PA7) (Pseudomonas aeruginosa (strain PA7)).